The primary structure comprises 451 residues: Phosphoglucosamine mutase (451 aa).

Ser-102 acts as the Phosphoserine intermediate in catalysis. Ser-102, Asp-242, Asp-244, and Asp-246 together coordinate Mg(2+). Ser-102 carries the phosphoserine modification.

It belongs to the phosphohexose mutase family. Mg(2+) is required as a cofactor. Activated by phosphorylation.

The enzyme catalyses alpha-D-glucosamine 1-phosphate = D-glucosamine 6-phosphate. Catalyzes the conversion of glucosamine-6-phosphate to glucosamine-1-phosphate. This is Phosphoglucosamine mutase from Staphylococcus aureus (strain USA300).